We begin with the raw amino-acid sequence, 159 residues long: Cytochrome c-type biogenesis protein CcmE (159 aa).

Over 1-8 (MNPRRKKR) the chain is Cytoplasmic. A helical; Signal-anchor for type II membrane protein transmembrane segment spans residues 9-29 (LLVIVAVLFGIGASIGLVLYA). Residues 30 to 159 (LQENINLFYT…KPKYNLDSGN (130 aa)) are Periplasmic-facing. Residues H130 and Y134 each contribute to the heme site.

The protein belongs to the CcmE/CycJ family.

The protein resides in the cell inner membrane. Functionally, heme chaperone required for the biogenesis of c-type cytochromes. Transiently binds heme delivered by CcmC and transfers the heme to apo-cytochromes in a process facilitated by CcmF and CcmH. The chain is Cytochrome c-type biogenesis protein CcmE from Pseudoalteromonas translucida (strain TAC 125).